We begin with the raw amino-acid sequence, 425 residues long: Threonylcarbamoyladenosine tRNA methylthiotransferase (425 aa).

The region spanning 60 to 295 (RKNELIEVLS…RSYTRYTDER (236 aa)) is the Radical SAM core domain. [4Fe-4S] cluster-binding residues include Cys74, Cys78, and Cys81. Residues 293–355 (DERIGELHRV…KFSMISKPAS (63 aa)) form the TRAM domain. Residues 362 to 382 (PLSLMHLFPLAVFCLVLITLY) traverse the membrane as a helical segment.

The protein belongs to the methylthiotransferase family. CDKAL1 subfamily. Requires [4Fe-4S] cluster as cofactor.

It localises to the membrane. The enzyme catalyses N(6)-L-threonylcarbamoyladenosine(37) in tRNA + (sulfur carrier)-SH + AH2 + 2 S-adenosyl-L-methionine = 2-methylsulfanyl-N(6)-L-threonylcarbamoyladenosine(37) in tRNA + (sulfur carrier)-H + 5'-deoxyadenosine + L-methionine + A + S-adenosyl-L-homocysteine + 2 H(+). Its function is as follows. Catalyzes the methylthiolation of N6-threonylcarbamoyladenosine (t(6)A), leading to the formation of 2-methylthio-N6-threonylcarbamoyladenosine (ms(2)t(6)A) at position 37 in tRNAs that read codons beginning with adenine. This is Threonylcarbamoyladenosine tRNA methylthiotransferase from Caenorhabditis elegans.